Consider the following 245-residue polypeptide: 1-(5-phosphoribosyl)-5-[(5-phosphoribosylamino)methylideneamino] imidazole-4-carboxamide isomerase (245 aa).

Asp7 acts as the Proton acceptor in catalysis. Asp129 acts as the Proton donor in catalysis.

This sequence belongs to the HisA/HisF family.

It is found in the cytoplasm. The catalysed reaction is 1-(5-phospho-beta-D-ribosyl)-5-[(5-phospho-beta-D-ribosylamino)methylideneamino]imidazole-4-carboxamide = 5-[(5-phospho-1-deoxy-D-ribulos-1-ylimino)methylamino]-1-(5-phospho-beta-D-ribosyl)imidazole-4-carboxamide. It functions in the pathway amino-acid biosynthesis; L-histidine biosynthesis; L-histidine from 5-phospho-alpha-D-ribose 1-diphosphate: step 4/9. The chain is 1-(5-phosphoribosyl)-5-[(5-phosphoribosylamino)methylideneamino] imidazole-4-carboxamide isomerase from Shewanella sp. (strain MR-7).